The chain runs to 513 residues: Cytochrome P450 86A1 (513 aa).

A helical transmembrane segment spans residues 7 to 27 (ILTGYAVAALSVYALWFYFLS). Cys-456 provides a ligand contact to heme.

The protein belongs to the cytochrome P450 family. The cofactor is heme. Expressed in roots.

It localises to the membrane. The catalysed reaction is an omega-methyl-long-chain fatty acid + reduced [NADPH--hemoprotein reductase] + O2 = an omega-hydroxy-long-chain fatty acid + oxidized [NADPH--hemoprotein reductase] + H2O + H(+). In terms of biological role, catalyzes the omega-hydroxylation of various fatty acids (FA). Acts on saturated and unsaturated fatty acids with chain lengths from C12 to C18 but not on hexadecane. The chain is Cytochrome P450 86A1 (CYP86A1) from Arabidopsis thaliana (Mouse-ear cress).